The primary structure comprises 77 residues: MAEVLEKVTKIIVDRLGVEESKVTLEASFKEDLGADSLDVVELVMELEDEFGVEISDGDAENINTVGDAVKYIEANA.

The 76-residue stretch at 2 to 77 folds into the Carrier domain; it reads AEVLEKVTKI…DAVKYIEANA (76 aa). The residue at position 37 (serine 37) is an O-(pantetheine 4'-phosphoryl)serine.

Belongs to the acyl carrier protein (ACP) family. In terms of processing, 4'-phosphopantetheine is transferred from CoA to a specific serine of apo-ACP by AcpS. This modification is essential for activity because fatty acids are bound in thioester linkage to the sulfhydryl of the prosthetic group.

The protein localises to the cytoplasm. It functions in the pathway lipid metabolism; fatty acid biosynthesis. Functionally, carrier of the growing fatty acid chain in fatty acid biosynthesis. This Listeria innocua serovar 6a (strain ATCC BAA-680 / CLIP 11262) protein is Acyl carrier protein.